Reading from the N-terminus, the 74-residue chain is Exodeoxyribonuclease 7 small subunit (74 aa).

It belongs to the XseB family. Heterooligomer composed of large and small subunits.

The protein resides in the cytoplasm. It catalyses the reaction Exonucleolytic cleavage in either 5'- to 3'- or 3'- to 5'-direction to yield nucleoside 5'-phosphates.. Functionally, bidirectionally degrades single-stranded DNA into large acid-insoluble oligonucleotides, which are then degraded further into small acid-soluble oligonucleotides. The polypeptide is Exodeoxyribonuclease 7 small subunit (Neisseria meningitidis serogroup A / serotype 4A (strain DSM 15465 / Z2491)).